The primary structure comprises 507 residues: Maturase K (507 aa).

Belongs to the intron maturase 2 family. MatK subfamily.

It localises to the plastid. It is found in the chloroplast. Its function is as follows. Usually encoded in the trnK tRNA gene intron. Probably assists in splicing its own and other chloroplast group II introns. The sequence is that of Maturase K from Liriodendron chinense (Chinese tulip tree).